A 464-amino-acid polypeptide reads, in one-letter code: Soluble pyridine nucleotide transhydrogenase (464 aa).

Residue 35–44 coordinates FAD; sequence DSRRVVGGNC.

It belongs to the class-I pyridine nucleotide-disulfide oxidoreductase family. FAD is required as a cofactor.

It is found in the cytoplasm. It carries out the reaction NAD(+) + NADPH = NADH + NADP(+). Conversion of NADPH, generated by peripheral catabolic pathways, to NADH, which can enter the respiratory chain for energy generation. The polypeptide is Soluble pyridine nucleotide transhydrogenase (Pseudomonas aeruginosa (strain LESB58)).